The primary structure comprises 235 residues: Glycerol-3-phosphate acyltransferase (235 aa).

The next 6 membrane-spanning stretches (helical) occupy residues 4–24, 56–76, 94–114, 122–142, 152–172, and 191–211; these read LLAI…LVAG, VVTL…VAFF, LLAG…GFKG, AGML…IFLL, VASM…KYIF, and FHDS…LAIL.

The protein belongs to the PlsY family. In terms of assembly, probably interacts with PlsX.

It is found in the cell inner membrane. It carries out the reaction an acyl phosphate + sn-glycerol 3-phosphate = a 1-acyl-sn-glycero-3-phosphate + phosphate. Its pathway is lipid metabolism; phospholipid metabolism. Functionally, catalyzes the transfer of an acyl group from acyl-phosphate (acyl-PO(4)) to glycerol-3-phosphate (G3P) to form lysophosphatidic acid (LPA). This enzyme utilizes acyl-phosphate as fatty acyl donor, but not acyl-CoA or acyl-ACP. In Pelodictyon phaeoclathratiforme (strain DSM 5477 / BU-1), this protein is Glycerol-3-phosphate acyltransferase.